The sequence spans 958 residues: Dermatan-sulfate epimerase (958 aa).

A signal peptide spans 1–22 (MRTHTRGAPSVFFICLFCFVSA). At 23 to 902 (CVTDENPEVM…APALSASYTR (880 aa)) the chain is on the lumenal side. Asn-183 carries an N-linked (GlcNAc...) asparagine glycan. His-205 functions as the Proton donor in the catalytic mechanism. Residue Tyr-261 is part of the active site. 2 N-linked (GlcNAc...) asparagine glycosylation sites follow: Asn-336 and Asn-411. Mn(2+) is bound by residues His-452 and Glu-470. Tyr-473 is an active-site residue. A Mn(2+)-binding site is contributed by Asn-481. N-linked (GlcNAc...) asparagine glycosylation is found at Asn-642 and Asn-648. The chain crosses the membrane as a helical span at residues 903-923 (LFLILNIAIFFVMLAMQLTYF). At 924–933 (QRAQSLHGQR) the chain is on the cytoplasmic side. The chain crosses the membrane as a helical span at residues 934–954 (CLYAVLLIDSCILLWLYSSCS). The Lumenal portion of the chain corresponds to 955-958 (QSQC).

It belongs to the dermatan-sulfate isomerase family. It depends on Mn(2+) as a cofactor. Post-translationally, N-glycosylated. Glycosylation is important for enzymatic activity.

Its subcellular location is the endoplasmic reticulum membrane. The protein resides in the golgi apparatus membrane. It is found in the cytoplasmic vesicle membrane. The protein localises to the microsome membrane. The catalysed reaction is chondroitin 4'-sulfate = dermatan 4'-sulfate. It participates in glycan metabolism; chondroitin sulfate biosynthesis. The protein operates within glycan metabolism; heparan sulfate biosynthesis. Functionally, converts D-glucuronic acid to L-iduronic acid (IdoUA) residues. Plays an important role in the biosynthesis of the glycosaminoglycan/mucopolysaccharide dermatan sulfate. The polypeptide is Dermatan-sulfate epimerase (DSE) (Bos taurus (Bovine)).